A 301-amino-acid chain; its full sequence is MDDVENGVADVFEKQAAFLSSALPYMQKYENETVVVKYGGHAMGDPALGRAFARDIALLKQSGINPVVVHGGGPQIAEILMKMGIESRFENGLRVTDERIVEVVEMVLAGSINKEIVALINAEGEWAIGLCGKDGNMVFAEKAYKTVIDPDSHIERVLDLGFVGEPVEVDRTLLDLLACSEMIPVLAPVAPGRDGKTYNINADIFAGAIAGALEAKRLLFLTDVPGVLDKKGKLLKELTISEAENLIKNETISGGMIPKVETCMKALQNGVEAVVILNGRTPHSVLLELFTEQGAGTLIVS.

Residues 72-73, arginine 94, and asparagine 199 contribute to the substrate site; that span reads GG.

This sequence belongs to the acetylglutamate kinase family. ArgB subfamily.

The protein localises to the cytoplasm. It carries out the reaction N-acetyl-L-glutamate + ATP = N-acetyl-L-glutamyl 5-phosphate + ADP. Its pathway is amino-acid biosynthesis; L-arginine biosynthesis; N(2)-acetyl-L-ornithine from L-glutamate: step 2/4. Catalyzes the ATP-dependent phosphorylation of N-acetyl-L-glutamate. The polypeptide is Acetylglutamate kinase (Bartonella henselae (strain ATCC 49882 / DSM 28221 / CCUG 30454 / Houston 1) (Rochalimaea henselae)).